A 195-amino-acid chain; its full sequence is MRLAEVVRNTSETQIRVKINLDGSGQQKLATGVPFLDHMLDQIARHGLIDLDIEAHGDTHIDDHHTVEDVGITLGQAIAKAVGDKKGIRRYGHSYVPLDEALSRVVIDFSGRPGLEFHVPFTRARIGTFDVDLSIEFFRGFVNHAGVTLHIDNLRGLNAHHQMETVFKAFGRALRMATELDERAAGQIPSTKGSL.

It belongs to the imidazoleglycerol-phosphate dehydratase family.

It localises to the cytoplasm. The catalysed reaction is D-erythro-1-(imidazol-4-yl)glycerol 3-phosphate = 3-(imidazol-4-yl)-2-oxopropyl phosphate + H2O. Its pathway is amino-acid biosynthesis; L-histidine biosynthesis; L-histidine from 5-phospho-alpha-D-ribose 1-diphosphate: step 6/9. The sequence is that of Imidazoleglycerol-phosphate dehydratase from Paraburkholderia phymatum (strain DSM 17167 / CIP 108236 / LMG 21445 / STM815) (Burkholderia phymatum).